The sequence spans 346 residues: Holliday junction branch migration complex subunit RuvB (346 aa).

The large ATPase domain (RuvB-L) stretch occupies residues Met1–Tyr182. Residues Ile21, Arg22, Gly63, Lys66, Thr67, Thr68, Glu129 to Phe131, Arg172, Tyr182, and Arg219 each bind ATP. Residue Thr67 coordinates Mg(2+). Positions Ser183–Asp253 are small ATPAse domain (RuvB-S). The tract at residues Glu256 to Ser346 is head domain (RuvB-H). Positions 311 and 316 each coordinate DNA.

It belongs to the RuvB family. In terms of assembly, homohexamer. Forms an RuvA(8)-RuvB(12)-Holliday junction (HJ) complex. HJ DNA is sandwiched between 2 RuvA tetramers; dsDNA enters through RuvA and exits via RuvB. An RuvB hexamer assembles on each DNA strand where it exits the tetramer. Each RuvB hexamer is contacted by two RuvA subunits (via domain III) on 2 adjacent RuvB subunits; this complex drives branch migration. In the full resolvosome a probable DNA-RuvA(4)-RuvB(12)-RuvC(2) complex forms which resolves the HJ.

The protein localises to the cytoplasm. The catalysed reaction is ATP + H2O = ADP + phosphate + H(+). Its function is as follows. The RuvA-RuvB-RuvC complex processes Holliday junction (HJ) DNA during genetic recombination and DNA repair, while the RuvA-RuvB complex plays an important role in the rescue of blocked DNA replication forks via replication fork reversal (RFR). RuvA specifically binds to HJ cruciform DNA, conferring on it an open structure. The RuvB hexamer acts as an ATP-dependent pump, pulling dsDNA into and through the RuvAB complex. RuvB forms 2 homohexamers on either side of HJ DNA bound by 1 or 2 RuvA tetramers; 4 subunits per hexamer contact DNA at a time. Coordinated motions by a converter formed by DNA-disengaged RuvB subunits stimulates ATP hydrolysis and nucleotide exchange. Immobilization of the converter enables RuvB to convert the ATP-contained energy into a lever motion, pulling 2 nucleotides of DNA out of the RuvA tetramer per ATP hydrolyzed, thus driving DNA branch migration. The RuvB motors rotate together with the DNA substrate, which together with the progressing nucleotide cycle form the mechanistic basis for DNA recombination by continuous HJ branch migration. Branch migration allows RuvC to scan DNA until it finds its consensus sequence, where it cleaves and resolves cruciform DNA. In Chlorobium phaeovibrioides (strain DSM 265 / 1930) (Prosthecochloris vibrioformis (strain DSM 265)), this protein is Holliday junction branch migration complex subunit RuvB.